The chain runs to 583 residues: Glycine--tRNA ligase (583 aa).

2 residues coordinate substrate: arginine 100 and glutamate 166. ATP is bound by residues 198–200, 208–213, 328–329, and 443–446; these read RNE, VRLREF, EV, and GTDR. Residue 213–217 coordinates substrate; that stretch reads FTIME. 439 to 443 provides a ligand contact to substrate; that stretch reads EPSFG.

It belongs to the class-II aminoacyl-tRNA synthetase family.

The protein resides in the cytoplasm. The catalysed reaction is tRNA(Gly) + glycine + ATP = glycyl-tRNA(Gly) + AMP + diphosphate. Functionally, catalyzes the attachment of glycine to tRNA(Gly). In Aeropyrum pernix (strain ATCC 700893 / DSM 11879 / JCM 9820 / NBRC 100138 / K1), this protein is Glycine--tRNA ligase.